A 317-amino-acid polypeptide reads, in one-letter code: Apolipoprotein E (317 aa).

An N-terminal signal peptide occupies residues 1–18 (MKVLWAALLVTFLAGCQA). T26 and T36 each carry an O-linked (GalNAc...) threonine glycan. 8 consecutive repeat copies span residues 80–101 (ALMDETMKELKAYKSELEEQLT), 102–123 (PVAEETRARLSKELQAAQARLG), 124–145 (ADMEDVCGRLVQYRGEVQAMLG), 146–167 (QSTEELRVRLASHLRKLRKRLL), 168–189 (RDADDLQKRLAVYQAGAREGAE), 190–211 (RGLSAIRERLGPLVEQGRVRAA), 212–233 (TVGSLAGQPLQERAQAWGERLR), and 234–255 (ARMEEMGSRTRDRLDEVKEQVA). The tract at residues 80–255 (ALMDETMKEL…RLDEVKEQVA (176 aa)) is 8 X 22 AA approximate tandem repeats. K93 carries an N-linked (Glc) (glycation) lysine glycan. A Methionine sulfoxide modification is found at M143. Phosphoserine; by FAM20C is present on S147. The segment at 158-168 (HLRKLRKRLLR) is LDL and other lipoprotein receptors binding. 162–165 (LRKR) contacts heparin. Positions 210-290 (AATVGSLAGQ…SWFEPLVEDM (81 aa)) are lipid-binding and lipoprotein association. An O-linked (GalNAc...) threonine glycan is attached at T212. 229–236 (GERLRARM) contacts heparin. The homooligomerization stretch occupies residues 266 to 317 (QQIRLQAEAFQARLKSWFEPLVEDMQRQWAGLVEKVQAAVGTSAAPVPSDNH). The specificity for association with VLDL stretch occupies residues 278–290 (RLKSWFEPLVEDM). An O-linked (GalNAc...) threonine glycan is attached at T307. Residues S308 and S314 are each glycosylated (O-linked (GalNAc...) serine).

This sequence belongs to the apolipoprotein A1/A4/E family. As to quaternary structure, homotetramer. May interact with ABCA1; functionally associated with ABCA1 in the biogenesis of HDLs. May interact with APP/A4 amyloid-beta peptide; the interaction is extremely stable in vitro but its physiological significance is unclear. May interact with MAPT. May interact with MAP2. In the cerebrospinal fluid, interacts with secreted SORL1. Interacts with PMEL; this allows the loading of PMEL luminal fragment on ILVs to induce fibril nucleation. (Microbial infection) Interacts with hepatitis C virus (HCV) envelope glycoprotein E2; this interaction is required for HCV infectivity and production. Post-translationally, APOE exists as multiple glycosylated and sialylated glycoforms within cells and in plasma. The extent of glycosylation and sialylation are tissue and context specific. Plasma APOE undergoes desialylation and is less glycosylated and sialylated than the cellular form. Glycosylation is not required for proper expression and secretion. O-glycosylated with core 1 or possibly core 8 glycans. Thr-307 and Ser-314 are minor glycosylation sites compared to Ser-308. In terms of processing, glycated in plasma VLDL of normal subjects, and of hyperglycemic diabetic patients at a higher level (2-3 fold). Phosphorylated by FAM20C in the extracellular medium. Post-translationally, undergoes C-terminal proteolytic processing in neurons. C-terminally truncated APOE has a tendency to form neurotoxic intracellular neurofibrillary tangle-like inclusions in neurons. In terms of tissue distribution, produced by several tissues and cell types and mainly found associated with lipid particles in the plasma, the interstitial fluid and lymph. Mainly synthesized by liver hepatocytes. Significant quantities are also produced in brain, mainly by astrocytes and glial cells in the cerebral cortex, but also by neurons in frontal cortex and hippocampus. It is also expressed by cells of the peripheral nervous system. Also expressed by adrenal gland, testis, ovary, skin, kidney, spleen and adipose tissue and macrophages in various tissues.

The protein localises to the secreted. The protein resides in the extracellular space. Its subcellular location is the extracellular matrix. It is found in the extracellular vesicle. It localises to the endosome. The protein localises to the multivesicular body. Functionally, APOE is an apolipoprotein, a protein associating with lipid particles, that mainly functions in lipoprotein-mediated lipid transport between organs via the plasma and interstitial fluids. APOE is a core component of plasma lipoproteins and is involved in their production, conversion and clearance. Apolipoproteins are amphipathic molecules that interact both with lipids of the lipoprotein particle core and the aqueous environment of the plasma. As such, APOE associates with chylomicrons, chylomicron remnants, very low density lipoproteins (VLDL) and intermediate density lipoproteins (IDL) but shows a preferential binding to high-density lipoproteins (HDL). It also binds a wide range of cellular receptors including the LDL receptor/LDLR, the LDL receptor-related proteins LRP1, LRP2 and LRP8 and the very low-density lipoprotein receptor/VLDLR that mediate the cellular uptake of the APOE-containing lipoprotein particles. Finally, APOE also has a heparin-binding activity and binds heparan-sulfate proteoglycans on the surface of cells, a property that supports the capture and the receptor-mediated uptake of APOE-containing lipoproteins by cells. A main function of APOE is to mediate lipoprotein clearance through the uptake of chylomicrons, VLDLs, and HDLs by hepatocytes. APOE is also involved in the biosynthesis by the liver of VLDLs as well as their uptake by peripheral tissues ensuring the delivery of triglycerides and energy storage in muscle, heart and adipose tissues. By participating in the lipoprotein-mediated distribution of lipids among tissues, APOE plays a critical role in plasma and tissues lipid homeostasis. APOE is also involved in two steps of reverse cholesterol transport, the HDLs-mediated transport of cholesterol from peripheral tissues to the liver, and thereby plays an important role in cholesterol homeostasis. First, it is functionally associated with ABCA1 in the biogenesis of HDLs in tissues. Second, it is enriched in circulating HDLs and mediates their uptake by hepatocytes. APOE also plays an important role in lipid transport in the central nervous system, regulating neuron survival and sprouting. APOE is also involved in innate and adaptive immune responses, controlling for instance the survival of myeloid-derived suppressor cells. Binds to the immune cell receptor LILRB4. APOE may also play a role in transcription regulation through a receptor-dependent and cholesterol-independent mechanism, that activates MAP3K12 and a non-canonical MAPK signal transduction pathway that results in enhanced AP-1-mediated transcription of APP. In terms of biological role, (Microbial infection) Through its interaction with HCV envelope glycoprotein E2, participates in the attachment of HCV to HSPGs and other receptors (LDLr, VLDLr, and SR-B1) on the cell surface and to the assembly, maturation and infectivity of HCV viral particles. This interaction is probably promoted via the up-regulation of cellular autophagy by the virus. The sequence is that of Apolipoprotein E from Homo sapiens (Human).